The primary structure comprises 140 residues: Putative nickel-responsive regulator 3 (140 aa).

Positions 81, 92, 94, and 100 each coordinate Ni(2+).

This sequence belongs to the transcriptional regulatory CopG/NikR family. It depends on Ni(2+) as a cofactor.

Its function is as follows. Transcriptional regulator. This chain is Putative nickel-responsive regulator 3, found in Methanosarcina acetivorans (strain ATCC 35395 / DSM 2834 / JCM 12185 / C2A).